A 421-amino-acid polypeptide reads, in one-letter code: Phosphatidylinositol 5-phosphate 4-kinase type-2 gamma (421 aa).

At Ala-2 the chain carries N-acetylalanine. Ser-26 carries the phosphoserine modification. A PIPK domain is found at 43–420 (AADPLVGVFL…RFLDFITNIF (378 aa)). Positions 69–75 (VMLLPDD) are required for interaction with PIP5K1A. Ser-349 bears the Phosphoserine mark.

In terms of assembly, interacts with PIP5K1A; the interaction inhibits PIP5K1A kinase activity. Post-translationally, phosphorylated, phosphorylation is induced by EGF.

The protein localises to the endoplasmic reticulum. Its subcellular location is the cytoplasm. It carries out the reaction a 1,2-diacyl-sn-glycero-3-phospho-(1D-myo-inositol-5-phosphate) + ATP = a 1,2-diacyl-sn-glycero-3-phospho-(1D-myo-inositol-4,5-bisphosphate) + ADP + H(+). It catalyses the reaction 1,2-dihexadecanoyl-sn-glycero-3-phospho-(1D-myo-inositol-5-phosphate) + ATP = 1,2-dihexadecanoyl-sn-glycero-3-phospho-(1D-myo-inositol-4,5-bisphosphate) + ADP + H(+). The enzyme catalyses 1,2-dihexadecanoyl-sn-glycero-3-phospho-(1D-myo-inositol-5-phosphate) + GTP = 1,2-dihexadecanoyl-sn-glycero-3-phospho-(1D-myo-inositol-4,5-bisphosphate) + GDP + H(+). Phosphatidylinositol 5-phosphate 4-kinase with low enzymatic activity. May be a GTP sensor, has higher GTP-dependent kinase activity than ATP-dependent kinase activity. PIP4Ks negatively regulate insulin signaling through a catalytic-independent mechanism. They interact with PIP5Ks and suppress PIP5K-mediated PtdIns(4,5)P2 synthesis and insulin-dependent conversion to PtdIns(3,4,5)P3. This Homo sapiens (Human) protein is Phosphatidylinositol 5-phosphate 4-kinase type-2 gamma.